A 426-amino-acid polypeptide reads, in one-letter code: Growth-regulating factor 9 (426 aa).

The 36-residue stretch at 92–127 folds into the QLQ domain; it reads PFTPSQWMELEHQALIYKYLNAKAPIPSSLLISISK. The 45-residue stretch at 151 to 195 folds into the WRC domain; that stretch reads DPEPGRCRRTDGKKWRCSKEAMADHKYCERHINRNRHRSRKPVEN. 2 consecutive short sequence motifs (bipartite nuclear localization signal) follow at residues 156-166 and 184-191; these read RCRRTDGKKWR and RNRHRSRK. The tract at residues 184–222 is disordered; sequence RNRHRSRKPVENQSRKTVKETPCAGSLPSSVGQGSFKKA. Residues 191-202 show a composition bias toward basic and acidic residues; sequence KPVENQSRKTVK.

This sequence belongs to the GRF family.

Its subcellular location is the nucleus. Its function is as follows. Transcription activator that plays a regulatory role in gibberellin-induced stem elongation. The chain is Growth-regulating factor 9 (GRF9) from Oryza sativa subsp. japonica (Rice).